A 164-amino-acid chain; its full sequence is Small ribosomal subunit protein uS5 (164 aa).

The 64-residue stretch at 10–73 folds into the S5 DRBM domain; sequence LEERVVAVNR…DDAKKNLIEV (64 aa).

This sequence belongs to the universal ribosomal protein uS5 family. As to quaternary structure, part of the 30S ribosomal subunit. Contacts proteins S4 and S8.

In terms of biological role, with S4 and S12 plays an important role in translational accuracy. Located at the back of the 30S subunit body where it stabilizes the conformation of the head with respect to the body. This is Small ribosomal subunit protein uS5 from Streptococcus pneumoniae serotype 2 (strain D39 / NCTC 7466).